The chain runs to 691 residues: Methionine--tRNA ligase (691 aa).

The 'HIGH' region motif lies at 12-22; that stretch reads PYANGSFHIGH. Residues Cys143, Cys146, Cys156, and Cys159 each coordinate Zn(2+). Positions 341–345 match the 'KMSKS' region motif; it reads KMSKS. Position 344 (Lys344) interacts with ATP. In terms of domain architecture, tRNA-binding spans 585–691; it reads DFVKVDLRIA…PGAQPGMRIH (107 aa).

The protein belongs to the class-I aminoacyl-tRNA synthetase family. MetG type 1 subfamily. Homodimer. Zn(2+) is required as a cofactor.

The protein resides in the cytoplasm. It carries out the reaction tRNA(Met) + L-methionine + ATP = L-methionyl-tRNA(Met) + AMP + diphosphate. Is required not only for elongation of protein synthesis but also for the initiation of all mRNA translation through initiator tRNA(fMet) aminoacylation. The sequence is that of Methionine--tRNA ligase from Bordetella avium (strain 197N).